The primary structure comprises 207 residues: Large ribosomal subunit protein bL25 (207 aa).

A disordered region spans residues 185–207 (DLEEETGEAAAEAEAPAEEGAES).

It belongs to the bacterial ribosomal protein bL25 family. CTC subfamily. Part of the 50S ribosomal subunit; part of the 5S rRNA/L5/L18/L25 subcomplex. Contacts the 5S rRNA. Binds to the 5S rRNA independently of L5 and L18.

In terms of biological role, this is one of the proteins that binds to the 5S RNA in the ribosome where it forms part of the central protuberance. This chain is Large ribosomal subunit protein bL25, found in Rhodococcus jostii (strain RHA1).